The chain runs to 146 residues: NADH-quinone oxidoreductase subunit A (146 aa).

The next 3 helical transmembrane spans lie at phenylalanine 14–phenylalanine 34, phenylalanine 66–tryptophan 86, and valine 96–valine 116.

The protein belongs to the complex I subunit 3 family. NDH-1 is composed of 13 different subunits. Subunits NuoA, H, J, K, L, M, N constitute the membrane sector of the complex.

The protein resides in the cell inner membrane. The catalysed reaction is a quinone + NADH + 5 H(+)(in) = a quinol + NAD(+) + 4 H(+)(out). Functionally, NDH-1 shuttles electrons from NADH, via FMN and iron-sulfur (Fe-S) centers, to quinones in the respiratory chain. The immediate electron acceptor for the enzyme in this species is believed to be ubiquinone. Couples the redox reaction to proton translocation (for every two electrons transferred, four hydrogen ions are translocated across the cytoplasmic membrane), and thus conserves the redox energy in a proton gradient. The polypeptide is NADH-quinone oxidoreductase subunit A (Serratia proteamaculans (strain 568)).